We begin with the raw amino-acid sequence, 238 residues long: tRNA (guanine-N(7)-)-methyltransferase (238 aa).

Glu-62, Glu-87, Asp-119, and Asp-141 together coordinate S-adenosyl-L-methionine. Asp-141 is an active-site residue. Substrate contacts are provided by residues Lys-145, Asp-177, and 216–219; that span reads TRYE.

It belongs to the class I-like SAM-binding methyltransferase superfamily. TrmB family.

It catalyses the reaction guanosine(46) in tRNA + S-adenosyl-L-methionine = N(7)-methylguanosine(46) in tRNA + S-adenosyl-L-homocysteine. It functions in the pathway tRNA modification; N(7)-methylguanine-tRNA biosynthesis. Catalyzes the formation of N(7)-methylguanine at position 46 (m7G46) in tRNA. The protein is tRNA (guanine-N(7)-)-methyltransferase of Novosphingobium aromaticivorans (strain ATCC 700278 / DSM 12444 / CCUG 56034 / CIP 105152 / NBRC 16084 / F199).